The sequence spans 621 residues: MNLKFYNLIFFISFLICCIHGQRYLPVEGGKCEKYIGDGDSGKRICNGYLANPDSVYVHNKTQQETLKDLRSLINLLELNNPSKECINPSNYKIMCAMMFPECIEINGTNIVKPITLPIYTCNSFCKEALVTCSVPNTIASCDGGTNLPIQLPYTPIEWVKYNLTIYGGVDDYRVNCTDPTLISDSGSSSEIEVGCVEPLIKRPTNDTKGDLEKGYFYVNSQCVINCPVTGMHPKSVWNQIFKINDVLSSISLACTLILLFTFGILNPKLNRFDKKNLFFIAGVFGMSVSGVLIAANGSEKTVCPTPERYAVNTDRVCVASGFLVHFSALFAILWWTIGLADVYYGIKFVGKKIKIKVRYYLLATLTISLAFTLVPLGTGQYQAGLSNVMCFLKDEIYQSMTFFVPLGICLTMGTILMILVMREIYVIVKSNSTSSSFSSSSSKSKSKSKSSDSISYLKLQVKPMLNIILFYFTFLYLFLFVRVINSRYQEYEDSAIPYMLCLAKGGGDSCRLKGPSAGSLGYFAYCLRIYGIYLFIISFLSSRTIKIWKESIILNNAFVTPIIKFIDSSFSNRFSSSKNTSTTQNSTLNNTESDTSKRGNSSAVSINLESRNYNTDDDDL.

The signal sequence occupies residues 1–21 (MNLKFYNLIFFISFLICCIHG). Residues 22 to 246 (QRYLPVEGGK…VWNQIFKIND (225 aa)) lie on the Extracellular side of the membrane. Residues 27–166 (VEGGKCEKYI…IEWVKYNLTI (140 aa)) form the FZ domain. Disulfide bonds link Cys32-Cys103 and Cys46-Cys96. N-linked (GlcNAc...) asparagine glycosylation is found at Asn60, Asn107, Asn163, Asn176, and Asn206. The chain crosses the membrane as a helical span at residues 247-267 (VLSSISLACTLILLFTFGILN). At 268-277 (PKLNRFDKKN) the chain is on the cytoplasmic side. Residues 278-298 (LFFIAGVFGMSVSGVLIAANG) form a helical membrane-spanning segment. Residues 299–318 (SEKTVCPTPERYAVNTDRVC) are Extracellular-facing. Residues 319–339 (VASGFLVHFSALFAILWWTIG) traverse the membrane as a helical segment. Over 340–359 (LADVYYGIKFVGKKIKIKVR) the chain is Cytoplasmic. The helical transmembrane segment at 360-380 (YYLLATLTISLAFTLVPLGTG) threads the bilayer. Residues 381–400 (QYQAGLSNVMCFLKDEIYQS) lie on the Extracellular side of the membrane. The helical transmembrane segment at 401 to 421 (MTFFVPLGICLTMGTILMILV) threads the bilayer. Residues 422 to 464 (MREIYVIVKSNSTSSSFSSSSSKSKSKSKSSDSISYLKLQVKP) are Cytoplasmic-facing. A helical membrane pass occupies residues 465–485 (MLNIILFYFTFLYLFLFVRVI). Topologically, residues 486-520 (NSRYQEYEDSAIPYMLCLAKGGGDSCRLKGPSAGS) are extracellular. A helical transmembrane segment spans residues 521–541 (LGYFAYCLRIYGIYLFIISFL). Over 542–621 (SSRTIKIWKE…RNYNTDDDDL (80 aa)) the chain is Cytoplasmic. Residues 575-594 (FSSSKNTSTTQNSTLNNTES) are compositionally biased toward low complexity. A disordered region spans residues 575-603 (FSSSKNTSTTQNSTLNNTESDTSKRGNSS).

The protein belongs to the G-protein coupled receptor Fz/Smo family.

It localises to the membrane. This is Frizzled and smoothened-like protein H (fslH) from Dictyostelium discoideum (Social amoeba).